Reading from the N-terminus, the 179-residue chain is ATP synthase subunit delta (179 aa).

The protein belongs to the ATPase delta chain family. In terms of assembly, F-type ATPases have 2 components, F(1) - the catalytic core - and F(0) - the membrane proton channel. F(1) has five subunits: alpha(3), beta(3), gamma(1), delta(1), epsilon(1). F(0) has three main subunits: a(1), b(2) and c(10-14). The alpha and beta chains form an alternating ring which encloses part of the gamma chain. F(1) is attached to F(0) by a central stalk formed by the gamma and epsilon chains, while a peripheral stalk is formed by the delta and b chains.

Its subcellular location is the cell membrane. F(1)F(0) ATP synthase produces ATP from ADP in the presence of a proton or sodium gradient. F-type ATPases consist of two structural domains, F(1) containing the extramembraneous catalytic core and F(0) containing the membrane proton channel, linked together by a central stalk and a peripheral stalk. During catalysis, ATP synthesis in the catalytic domain of F(1) is coupled via a rotary mechanism of the central stalk subunits to proton translocation. Its function is as follows. This protein is part of the stalk that links CF(0) to CF(1). It either transmits conformational changes from CF(0) to CF(1) or is implicated in proton conduction. The chain is ATP synthase subunit delta from Staphylococcus haemolyticus (strain JCSC1435).